An 832-amino-acid chain; its full sequence is Thymine dioxygenase JBP1-A (832 aa).

The segment covering 1–12 (MKQKRGKQDVKM) has biased composition (basic and acidic residues). The disordered stretch occupies residues 1-24 (MKQKRGKQDVKMLESAPPQLLPKK). The tract at residues 80 to 282 (VVGGVFLPGA…RLTCVCYYRA (203 aa)) is thymine dioxygenase. Fe cation contacts are provided by His207, Asp209, and His257. Residue Arg273 coordinates 2-oxoglutarate. A DNA-binding JBP1 domain region spans residues 409–578 (LGGALKAAEE…IEEARRRGSS (170 aa)).

Belongs to the TET family. JBP1 subfamily. Monomer. Binds to DNA as a monomer. The cofactor is Fe(2+).

Its subcellular location is the nucleus. The enzyme catalyses thymine + 2-oxoglutarate + O2 = 5-hydroxymethyluracil + succinate + CO2. Its function is as follows. Dioxygenase that catalyzes the first step of DNA base J (beta-d-glucosyl-HOMedU) biosynthesis by converting thymine to 5-hydroxymethyluracil (HOMedU). DNA base J is a hypermodified thymidine residue found in the genome of kinetoplastid parasites, which is localized primarily to repetitive DNA, namely the telomeres, and is implicated in the regulation of antigenic variation. Also specifically binds to base J-containing DNA (J-DNA). Involved in propagation and maintenance of DNA base J synthesis initiated by JBP2 by specifically binding already synthesized DNA base J and propagating J synthesis. Thymine dioxygenase activity and J-DNA-binding are independent functions. The polypeptide is Thymine dioxygenase JBP1-A (JBP1A) (Trypanosoma cruzi (strain CL Brener)).